A 239-amino-acid chain; its full sequence is Methylthioribulose-1-phosphate dehydratase (239 aa).

Position 94 (Cys94) interacts with substrate. 2 residues coordinate Zn(2+): His112 and His114. Glu136 (proton donor/acceptor) is an active-site residue. His192 is a Zn(2+) binding site.

It belongs to the aldolase class II family. MtnB subfamily. Zn(2+) serves as cofactor.

The protein resides in the cytoplasm. It carries out the reaction 5-(methylsulfanyl)-D-ribulose 1-phosphate = 5-methylsulfanyl-2,3-dioxopentyl phosphate + H2O. It functions in the pathway amino-acid biosynthesis; L-methionine biosynthesis via salvage pathway; L-methionine from S-methyl-5-thio-alpha-D-ribose 1-phosphate: step 2/6. Catalyzes the dehydration of methylthioribulose-1-phosphate (MTRu-1-P) into 2,3-diketo-5-methylthiopentyl-1-phosphate (DK-MTP-1-P). Functions in the methionine salvage pathway. May play a role in apoptosis. The chain is Methylthioribulose-1-phosphate dehydratase from Xenopus tropicalis (Western clawed frog).